The following is a 2568-amino-acid chain: Highly reducing polyketide synthase resH (2568 aa).

The region spanning 9–437 (PEPIAIVGMA…GANAHAILDA (429 aa)) is the Ketosynthase family 3 (KS3) domain. Active-site for beta-ketoacyl synthase activity residues include cysteine 184, histidine 319, and histidine 359. Residues 549–877 (FIFTGQGAQW…KLAGSLFLSG (329 aa)) enclose the Malonyl-CoA:ACP transacylase (MAT) domain. Positions 942–1081 (HDLLGSRLPG…TNDQLLWPDD (140 aa)) are N-terminal hotdog fold. Residues 942–1244 (HDLLGSRLPG…FSSLETASSD (303 aa)) enclose the PKS/mFAS DH domain. Histidine 974 acts as the Proton acceptor; for dehydratase activity in catalysis. Residues 1091–1244 (NKDSYDRRWY…FSSLETASSD (154 aa)) are C-terminal hotdog fold. The active-site Proton donor; for dehydratase activity is the aspartate 1156. Positions 1295-1595 (VTRLAIRSSA…SGADVVLDDY (301 aa)) are methyltransferase (CMet) domain. The 302-residue stretch at 1853–2154 (GRLDSFYFKE…QEDSVGLAVL (302 aa)) folds into the Enoyl reductase (ER) domain. One can recognise a Ketoreductase (KR) domain in the interval 2177–2357 (ASYLLIGCLG…QATSIALGMI (181 aa)). Residues 2485-2563 (AVKSAILGLI…GLADQVVSLA (79 aa)) form the Carrier domain. At serine 2522 the chain carries O-(pantetheine 4'-phosphoryl)serine.

Pantetheine 4'-phosphate is required as a cofactor.

It participates in antifungal biosynthesis. Highly reducing polyketide synthase; part of the gene cluster that mediates the biosynthesis of the tetrahydropyranyl antifungal agent restricticin that acts as an inhibitor of CYP51 and blocks the ergosterol biosynthesis. The highly reducing polyketide synthase resH, the short chain dehydrogenase resG, the cyclase resF, the FAD-dependent monooxygenase resA and the enoylreductase resD are required to generate the first stable intermediate desmethylrestrictinol. ResH with resD biosynthesize the first polyketide chain intermediate that is reduced by resG, followed by epoxidation by resA before 6-endo cyclization via epoxide opening by resF leads to desmethylrestrictinol. The methyltransferase resE then catalyzes the C4 O-methylation of desmethylrestrictinol to produce restrictinol, and the nonribosomal peptide synthetase resC catalyzes the C3 esterification of restrictinol with glycine that leads to restricticin. In Aspergillus sclerotiorum, this protein is Highly reducing polyketide synthase resH.